Reading from the N-terminus, the 99-residue chain is DNA-directed RNA polymerase subunit omega (99 aa).

This sequence belongs to the RNA polymerase subunit omega family. As to quaternary structure, the RNAP catalytic core consists of 2 alpha, 1 beta, 1 beta' and 1 omega subunit. When a sigma factor is associated with the core the holoenzyme is formed, which can initiate transcription.

It catalyses the reaction RNA(n) + a ribonucleoside 5'-triphosphate = RNA(n+1) + diphosphate. Functionally, promotes RNA polymerase assembly. Latches the N- and C-terminal regions of the beta' subunit thereby facilitating its interaction with the beta and alpha subunits. This Xylella fastidiosa (strain 9a5c) protein is DNA-directed RNA polymerase subunit omega (rpoZ).